The following is a 556-amino-acid chain: 2-succinyl-5-enolpyruvyl-6-hydroxy-3-cyclohexene-1-carboxylate synthase (556 aa).

Belongs to the TPP enzyme family. MenD subfamily. As to quaternary structure, homodimer. The cofactor is Mg(2+). Mn(2+) is required as a cofactor. Thiamine diphosphate serves as cofactor.

It carries out the reaction isochorismate + 2-oxoglutarate + H(+) = 5-enolpyruvoyl-6-hydroxy-2-succinyl-cyclohex-3-ene-1-carboxylate + CO2. The protein operates within quinol/quinone metabolism; 1,4-dihydroxy-2-naphthoate biosynthesis; 1,4-dihydroxy-2-naphthoate from chorismate: step 2/7. Its pathway is quinol/quinone metabolism; menaquinone biosynthesis. Its function is as follows. Catalyzes the thiamine diphosphate-dependent decarboxylation of 2-oxoglutarate and the subsequent addition of the resulting succinic semialdehyde-thiamine pyrophosphate anion to isochorismate to yield 2-succinyl-5-enolpyruvyl-6-hydroxy-3-cyclohexene-1-carboxylate (SEPHCHC). In Escherichia coli O8 (strain IAI1), this protein is 2-succinyl-5-enolpyruvyl-6-hydroxy-3-cyclohexene-1-carboxylate synthase.